Reading from the N-terminus, the 423-residue chain is Type II methyltransferase M.BamHI (423 aa).

Positions 397–414 (DFRQDHEGNSKGDKKNEN) are enriched in basic and acidic residues. Residues 397–423 (DFRQDHEGNSKGDKKNENNDQISLSLE) are disordered.

The protein belongs to the N(4)/N(6)-methyltransferase family.

It carries out the reaction a 2'-deoxycytidine in DNA + S-adenosyl-L-methionine = an N(4)-methyl-2'-deoxycytidine in DNA + S-adenosyl-L-homocysteine + H(+). Its function is as follows. A beta subtype methylase, recognizes the double-stranded sequence 5'-GGATCC-3', methylates C-5 on both strands, and protects the DNA from cleavage by the BamHI endonuclease. The sequence is that of Type II methyltransferase M.BamHI from Bacillus amyloliquefaciens (Bacillus velezensis).